The primary structure comprises 710 residues: Polyribonucleotide nucleotidyltransferase (710 aa).

Mg(2+) contacts are provided by Asp-489 and Asp-495. The region spanning 556–615 is the KH domain; the sequence is PKIDTIKIDVDKIKVVIGKGGETIDKIIAETGVKIDIDDEGNVSIYSSDQAAIDRTKEII. One can recognise an S1 motif domain in the interval 625 to 693; it reads GEVYHAKVIR…EKGRVDASMK (69 aa). The interval 691-710 is disordered; the sequence is SMKALIPRPPKPEKKEEKHD. Basic and acidic residues predominate over residues 700-710; that stretch reads PKPEKKEEKHD.

It belongs to the polyribonucleotide nucleotidyltransferase family. Requires Mg(2+) as cofactor.

The protein localises to the cytoplasm. The enzyme catalyses RNA(n+1) + phosphate = RNA(n) + a ribonucleoside 5'-diphosphate. Involved in mRNA degradation. Catalyzes the phosphorolysis of single-stranded polyribonucleotides processively in the 3'- to 5'-direction. This chain is Polyribonucleotide nucleotidyltransferase, found in Streptococcus pyogenes serotype M4 (strain MGAS10750).